Here is a 399-residue protein sequence, read N- to C-terminus: Fe-coproporphyrin III synthase (399 aa).

The Radical SAM core domain occupies 36 to 253 (KDKKPVVVWN…TRKLHEKGFP (218 aa)). Residues Cys50, Cys54, and Cys57 each coordinate [4Fe-4S] cluster.

Belongs to the radical SAM superfamily. It depends on [4Fe-4S] cluster as a cofactor.

It catalyses the reaction 12,18-didecarboxysiroheme + 2 AH2 + 2 S-adenosyl-L-methionine = Fe-coproporphyrin III + 2 5'-deoxyadenosine + 2 L-methionine + 2 acetate + 2 A + 2 H(+). The protein operates within porphyrin-containing compound metabolism; protoheme biosynthesis. In terms of biological role, involved in siroheme-dependent heme b biosynthesis. Catalyzes the conversion of didecarboxysiroheme into Fe-coproporphyrin III by oxidative loss of two acetic acid side chains. In Methanosarcina barkeri (strain Fusaro / DSM 804), this protein is Fe-coproporphyrin III synthase.